The chain runs to 178 residues: Large ribosomal subunit protein uL6 (178 aa).

The protein belongs to the universal ribosomal protein uL6 family. As to quaternary structure, part of the 50S ribosomal subunit.

This protein binds to the 23S rRNA, and is important in its secondary structure. It is located near the subunit interface in the base of the L7/L12 stalk, and near the tRNA binding site of the peptidyltransferase center. This is Large ribosomal subunit protein uL6 from Helicobacter hepaticus (strain ATCC 51449 / 3B1).